A 404-amino-acid chain; its full sequence is Glucose-1-phosphate adenylyltransferase (404 aa).

Residues Y99, G164, 179–180, and S197 contribute to the alpha-D-glucose 1-phosphate site; that span reads EK.

The protein belongs to the bacterial/plant glucose-1-phosphate adenylyltransferase family.

The catalysed reaction is alpha-D-glucose 1-phosphate + ATP + H(+) = ADP-alpha-D-glucose + diphosphate. The protein operates within capsule biogenesis; capsule polysaccharide biosynthesis. It functions in the pathway glycan biosynthesis; glycogen biosynthesis. Functionally, involved in the biosynthesis of ADP-glucose, a building block, required in the biosynthesis of maltose-1-phosphate (M1P) and in the elongation reactions to produce linear alpha-1,4-glucans. Catalyzes the reaction between ATP and alpha-D-glucose 1-phosphate (G1P) to produce pyrophosphate and ADP-Glc. In Mycolicibacterium paratuberculosis (strain ATCC BAA-968 / K-10) (Mycobacterium paratuberculosis), this protein is Glucose-1-phosphate adenylyltransferase.